We begin with the raw amino-acid sequence, 529 residues long: Bifunctional purine biosynthesis protein PurH (529 aa).

One can recognise an MGS-like domain in the interval 3 to 149; that stretch reads DRIPLKRALI…KNHAFVTVVV (147 aa).

Belongs to the PurH family.

The catalysed reaction is (6R)-10-formyltetrahydrofolate + 5-amino-1-(5-phospho-beta-D-ribosyl)imidazole-4-carboxamide = 5-formamido-1-(5-phospho-D-ribosyl)imidazole-4-carboxamide + (6S)-5,6,7,8-tetrahydrofolate. It carries out the reaction IMP + H2O = 5-formamido-1-(5-phospho-D-ribosyl)imidazole-4-carboxamide. It functions in the pathway purine metabolism; IMP biosynthesis via de novo pathway; 5-formamido-1-(5-phospho-D-ribosyl)imidazole-4-carboxamide from 5-amino-1-(5-phospho-D-ribosyl)imidazole-4-carboxamide (10-formyl THF route): step 1/1. Its pathway is purine metabolism; IMP biosynthesis via de novo pathway; IMP from 5-formamido-1-(5-phospho-D-ribosyl)imidazole-4-carboxamide: step 1/1. The chain is Bifunctional purine biosynthesis protein PurH from Paracoccus denitrificans (strain Pd 1222).